The chain runs to 224 residues: Adenylate kinase (224 aa).

Position 10-15 (10-15) interacts with ATP; the sequence is GSGKST. The tract at residues 30–59 is NMP; that stretch reads ASGDIIRAEINKGNALGREMKKYIEKGDLL. AMP contacts are provided by residues serine 31, arginine 36, 57-59, 83-86, and glutamine 90; these read DLL and GYPR. The tract at residues 124-161 is LID; it reads GRRICRQCGAVYHIKYNPSKVPGKCDICGGEVIQREDD. Arginine 125 lines the ATP pocket. Zn(2+) contacts are provided by cysteine 128 and cysteine 131. Position 134–135 (134–135) interacts with ATP; it reads VY. Zn(2+)-binding residues include cysteine 148 and cysteine 151. 2 residues coordinate AMP: arginine 158 and arginine 169. Position 197 (glycine 197) interacts with ATP.

Belongs to the adenylate kinase family. Monomer.

It localises to the cytoplasm. The enzyme catalyses AMP + ATP = 2 ADP. It functions in the pathway purine metabolism; AMP biosynthesis via salvage pathway; AMP from ADP: step 1/1. Functionally, catalyzes the reversible transfer of the terminal phosphate group between ATP and AMP. Plays an important role in cellular energy homeostasis and in adenine nucleotide metabolism. The polypeptide is Adenylate kinase (Thermococcus sibiricus (strain DSM 12597 / MM 739)).